Consider the following 234-residue polypeptide: Sugar fermentation stimulation protein homolog (234 aa).

The protein belongs to the SfsA family.

This is Sugar fermentation stimulation protein homolog from Shewanella pealeana (strain ATCC 700345 / ANG-SQ1).